A 340-amino-acid chain; its full sequence is uncharacterized protein (340 aa).

Helical transmembrane passes span 162–182 and 239–259; these read PLVP…VLAG and FWIA…IVVP.

It is found in the cell membrane. This is an uncharacterized protein from Mycobacterium tuberculosis (strain CDC 1551 / Oshkosh).